Consider the following 152-residue polypeptide: Ribosome maturation factor RimP (152 aa).

It belongs to the RimP family.

It is found in the cytoplasm. In terms of biological role, required for maturation of 30S ribosomal subunits. This chain is Ribosome maturation factor RimP, found in Porphyromonas gingivalis (strain ATCC BAA-308 / W83).